The primary structure comprises 375 residues: Adiponectin receptor protein 1 (375 aa).

Residues 1 to 60 (MSSHKGSVVAQGNGAPASNREADTVELAELGPLLEEKGKRVIANPPKAEEEQTCPVPQEE) form a disordered region. Over 1–136 (MSSHKGSVVA…SIFRIHTETG (136 aa)) the chain is Cytoplasmic. Residues 137–157 (NIWTHLLGFVLFLFLGILTML) traverse the membrane as a helical segment. Residues 158–170 (RPNMYFMAPLQEK) lie on the Extracellular side of the membrane. The helical transmembrane segment at 171–191 (VVFGMFFLGAVLCLSFSWLFH) threads the bilayer. Residue His191 participates in Zn(2+) binding. Residues 192–203 (TVYCHSEKVSRT) lie on the Cytoplasmic side of the membrane. A helical membrane pass occupies residues 204–224 (FSKLDYSGIALLIMGSFVPWL). The Extracellular portion of the chain corresponds to 225–234 (YYSFYCSPQP). The helical transmembrane segment at 235–255 (RLIYLSIVCVLGISAIIVAQW) threads the bilayer. Over 256-264 (DRFATPKHR) the chain is Cytoplasmic. The chain crosses the membrane as a helical span at residues 265 to 285 (QTRAGVFLGLGLSGVVPTMHF). The Extracellular segment spans residues 286–298 (TIAEGFVKATTVG). A helical membrane pass occupies residues 299–319 (QMGWFFLMAVMYITGAGLYAA). Topologically, residues 320–337 (RIPERFFPGKFDIWFQSH) are cytoplasmic. Zn(2+) is bound by residues His337 and His341. Residues 338–358 (QIFHVLVVAAAFVHFYGVSNL) form a helical membrane-spanning segment. Over 359 to 375 (QEFRYGLEGGCTDDTLL) the chain is Extracellular.

Belongs to the ADIPOR family. May form homooligomers and heterooligomers with ADIPOR2. Interacts with APPL2 (via BAR domain); hinders the accessibility of APPL1 to ADIPOR1; negatively regulates adiponectin signaling; ADIPOQ dissociates this interaction and facilitates the recruitment of APPL1 to ADIPOR1. Interacts with APPL1; ADIPOQ enhances this interaction; inhibites adiponectin-stimulated binding of APPL2 to ADIPOR1. As to expression, widely expressed. Highly expressed in heart and skeletal muscle. Expressed at intermediate level in brain, spleen, kidney, liver, placenta, lung and peripheral blood leukocytes. Weakly expressed in colon, thymus and small intestine.

It localises to the cell membrane. In terms of biological role, receptor for ADIPOQ, an essential hormone secreted by adipocytes that regulates glucose and lipid metabolism. Required for normal glucose and fat homeostasis and for maintaining a normal body weight. ADIPOQ-binding activates a signaling cascade that leads to increased AMPK activity, and ultimately to increased fatty acid oxidation, increased glucose uptake and decreased gluconeogenesis. Has high affinity for globular adiponectin and low affinity for full-length adiponectin. In Homo sapiens (Human), this protein is Adiponectin receptor protein 1.